The primary structure comprises 340 residues: HTH-type transcriptional regulator PtxS (340 aa).

Positions 12-67 (VTISEVAQAAGVSKATVSRYIGGDRQLLADATAQRIEAVIEQLGYRPNRMASALKR) constitute an HTH lacI-type domain. The H-T-H motif DNA-binding region spans 14–33 (ISEVAQAAGVSKATVSRYIG).

As to quaternary structure, homodimer.

2-ketogluconate acts as a molecular effector and causes dissociation of PtxS from its target promoter. Glucose negatively affects the molecular binding of PtxS and 2KGA, and gluconic acid inhibits the PtxS-2KGA binding reaction. Involved in the regulation of 2-ketogluconic acid metabolism via the control of the expression of the kgu operon. Binds directly to a 14-bp palindrome sequence via its conserved HTH motif. This is HTH-type transcriptional regulator PtxS from Pseudomonas plecoglossicida.